Reading from the N-terminus, the 164-residue chain is Cyanate hydratase (164 aa).

Catalysis depends on residues Arg-104, Glu-107, and Ser-130.

It belongs to the cyanase family.

The enzyme catalyses cyanate + hydrogencarbonate + 3 H(+) = NH4(+) + 2 CO2. In terms of biological role, catalyzes the reaction of cyanate with bicarbonate to produce ammonia and carbon dioxide. The chain is Cyanate hydratase from Botryotinia fuckeliana (strain B05.10) (Noble rot fungus).